Reading from the N-terminus, the 184-residue chain is Threonylcarbamoyl-AMP synthase (184 aa).

Residues 3–184 (AWFIQKAVSV…DAATGAILRQ (182 aa)) form the YrdC-like domain.

This sequence belongs to the SUA5 family. TsaC subfamily.

It localises to the cytoplasm. The catalysed reaction is L-threonine + hydrogencarbonate + ATP = L-threonylcarbamoyladenylate + diphosphate + H2O. Its function is as follows. Required for the formation of a threonylcarbamoyl group on adenosine at position 37 (t(6)A37) in tRNAs that read codons beginning with adenine. Catalyzes the conversion of L-threonine, HCO(3)(-)/CO(2) and ATP to give threonylcarbamoyl-AMP (TC-AMP) as the acyladenylate intermediate, with the release of diphosphate. The chain is Threonylcarbamoyl-AMP synthase from Hahella chejuensis (strain KCTC 2396).